Reading from the N-terminus, the 228-residue chain is Cytochrome c oxidase subunit 2 (228 aa).

Residues 1 to 26 (MSTWANLGLQDSASPLMEQLIFFHDH) are Mitochondrial intermembrane-facing. A helical membrane pass occupies residues 27–48 (ALLILVMITVLVGYLMFMLFFN). Residues 49–62 (NYVNRFLLHGQLIE) are Mitochondrial matrix-facing. Residues 63-82 (MIWTILPAIILLFIALPSLR) form a helical membrane-spanning segment. The Mitochondrial intermembrane segment spans residues 83–228 (LLYLLDEINE…FIKWISSNNS (146 aa)). Cu cation contacts are provided by H161, C196, E198, C200, H204, and M207. A Mg(2+)-binding site is contributed by E198.

This sequence belongs to the cytochrome c oxidase subunit 2 family. As to quaternary structure, component of the cytochrome c oxidase (complex IV, CIV), a multisubunit enzyme composed of a catalytic core of 3 subunits and several supernumerary subunits. The complex exists as a monomer or a dimer and forms supercomplexes (SCs) in the inner mitochondrial membrane with ubiquinol-cytochrome c oxidoreductase (cytochrome b-c1 complex, complex III, CIII). It depends on Cu cation as a cofactor.

Its subcellular location is the mitochondrion inner membrane. The enzyme catalyses 4 Fe(II)-[cytochrome c] + O2 + 8 H(+)(in) = 4 Fe(III)-[cytochrome c] + 2 H2O + 4 H(+)(out). In terms of biological role, component of the cytochrome c oxidase, the last enzyme in the mitochondrial electron transport chain which drives oxidative phosphorylation. The respiratory chain contains 3 multisubunit complexes succinate dehydrogenase (complex II, CII), ubiquinol-cytochrome c oxidoreductase (cytochrome b-c1 complex, complex III, CIII) and cytochrome c oxidase (complex IV, CIV), that cooperate to transfer electrons derived from NADH and succinate to molecular oxygen, creating an electrochemical gradient over the inner membrane that drives transmembrane transport and the ATP synthase. Cytochrome c oxidase is the component of the respiratory chain that catalyzes the reduction of oxygen to water. Electrons originating from reduced cytochrome c in the intermembrane space (IMS) are transferred via the dinuclear copper A center (CU(A)) of subunit 2 and heme A of subunit 1 to the active site in subunit 1, a binuclear center (BNC) formed by heme A3 and copper B (CU(B)). The BNC reduces molecular oxygen to 2 water molecules using 4 electrons from cytochrome c in the IMS and 4 protons from the mitochondrial matrix. The chain is Cytochrome c oxidase subunit 2 (mt:CoII) from Drosophila melanogaster (Fruit fly).